A 122-amino-acid chain; its full sequence is Large ribosomal subunit protein uL14 (122 aa).

It belongs to the universal ribosomal protein uL14 family. Part of the 50S ribosomal subunit. Forms a cluster with proteins L3 and L19. In the 70S ribosome, L14 and L19 interact and together make contacts with the 16S rRNA in bridges B5 and B8.

Binds to 23S rRNA. Forms part of two intersubunit bridges in the 70S ribosome. This Rickettsia canadensis (strain McKiel) protein is Large ribosomal subunit protein uL14.